We begin with the raw amino-acid sequence, 87 residues long: MKTLLLTLVVVTIVCLDLGYTRECYLNPHDTQTCPSGQEICYVKSWCNAWCSSRGKVLEFGCAATCPSVNTGTEIKCCSADKCNTYP.

Residues 1-21 (MKTLLLTLVVVTIVCLDLGYT) form the signal peptide. 5 disulfides stabilise this stretch: C24–C41, C34–C62, C47–C51, C66–C77, and C78–C83.

This sequence belongs to the three-finger toxin family. Long-chain subfamily. Type II alpha-neurotoxin sub-subfamily. In terms of tissue distribution, expressed by the venom gland.

The protein localises to the secreted. Binds with high affinity to muscular (tested on Torpedo marmorata, Kd=1.6 nM) and neuronal (chimeric alpha-7/CHRNA7, Kd=3 nM) nicotinic acetylcholine receptor (nAChR) and inhibits acetylcholine from binding to the receptor, thereby impairing neuromuscular and neuronal transmission. Also shows a very weak inhibition on GABA(A) receptors. The toxin (10 uM) inhibits 83% of current in channels composed of alpha-1-beta-3-gamma-2 (GABRA1-GABRB3-GABRG2) subunits, 39% of current in channels composed of alpha-2-beta-2-gamma-2 (GABRA2-GABRB2-GABRG2) subunits, and 33% of current in channels composed of alpha-5-beta-2-gamma-2 (GABRA5-GABRB2-GABRG2) subunits. This is Alpha-elapitoxin-Ls2a from Laticauda semifasciata (Black-banded sea krait).